A 228-amino-acid polypeptide reads, in one-letter code: Adapter protein MecA (228 aa).

The interval G79–Q98 is disordered. Positions S85–T95 are enriched in acidic residues.

Belongs to the MecA family. Homodimer.

In terms of biological role, enables the recognition and targeting of unfolded and aggregated proteins to the ClpC protease or to other proteins involved in proteolysis. In Lacticaseibacillus casei (strain BL23) (Lactobacillus casei), this protein is Adapter protein MecA.